A 251-amino-acid chain; its full sequence is Hydroxyacylglutathione hydrolase (251 aa).

Residues H53, H55, D57, H58, H110, D127, and H165 each contribute to the Zn(2+) site.

It belongs to the metallo-beta-lactamase superfamily. Glyoxalase II family. As to quaternary structure, monomer. Zn(2+) is required as a cofactor.

It catalyses the reaction an S-(2-hydroxyacyl)glutathione + H2O = a 2-hydroxy carboxylate + glutathione + H(+). The protein operates within secondary metabolite metabolism; methylglyoxal degradation; (R)-lactate from methylglyoxal: step 2/2. In terms of biological role, thiolesterase that catalyzes the hydrolysis of S-D-lactoyl-glutathione to form glutathione and D-lactic acid. This is Hydroxyacylglutathione hydrolase from Cronobacter sakazakii (strain ATCC BAA-894) (Enterobacter sakazakii).